Here is a 336-residue protein sequence, read N- to C-terminus: Potassium channel subfamily K member 1 (336 aa).

Topologically, residues 1–20 (MLQSLAGSSCVRLVERHRSA) are cytoplasmic. A helical membrane pass occupies residues 21-41 (WCFGFLVLGYLLYLVFGAVVF). Over 42-103 (SSVELPYEDL…SNASGNWNWD (62 aa)) the chain is Extracellular. Asparagine 95 carries N-linked (GlcNAc...) asparagine glycosylation. Residues 104 to 116 (FTSALFFASTVLS) constitute an intramembrane region (helical). The stretch at 117-122 (TTGYGH) is an intramembrane region. Residues 117–122 (TTGYGH) are selectivity filter 1. At 123 to 132 (TVPLSDGGKA) the chain is on the extracellular side. Residues 133-156 (FCIIYSVIGIPFTLLFLTAVVQRV) form a helical membrane-spanning segment. Residues 157-181 (TVHVTRRPVLYFHIRWGFSKQVVAI) lie on the Cytoplasmic side of the membrane. The chain crosses the membrane as a helical span at residues 182–202 (VHAVLLGFVTVSCFFFIPAAV). The Extracellular segment spans residues 203-211 (FSVLEDDWN). Positions 212–224 (FLESFYFCFISLS) form an intramembrane region, helical. The interval 225–230 (TIGLGD) is selectivity filter 2. An intramembrane segment occupies 225–231 (TIGLGDY). At 232–243 (VPGEGYNQKFRE) the chain is on the extracellular side. Residues 244-267 (LYKIGITCYLLLGLIAMLVVLETF) form a helical membrane-spanning segment. Over 268–336 (CELHELKKFR…PPYEDGSANH (69 aa)) the chain is Cytoplasmic. Residue lysine 274 forms a Glycyl lysine isopeptide (Lys-Gly) (interchain with G-Cter in SUMO) linkage. Positions 293-299 (IMEHDQL) are important for intracellular retention in recycling endosomes. A disordered region spans residues 310–336 (GLKEEQKQNEPFVASQSPPYEDGSANH). Serine 326 is subject to Phosphoserine.

This sequence belongs to the two pore domain potassium channel (TC 1.A.1.8) family. In terms of assembly, homodimer; disulfide-linked. Heterodimer with KCNK2; disulfide-linked. In astrocytes, forms mostly heterodimeric potassium channels with KCNK2, with only a minor proportion of functional channels containing homodimeric KCNK1. Interacts with KCNK3 and KCNK9, forming functional heterodimeric channels. Interacts with GNG4. Identified in a complex with PSD and ARF6; interacts only with PSD that is bound to ARF6. Interacts with UBE2I. In terms of processing, sumoylation is controversial. Sumoylated by UBE2I. Not sumoylated when expressed in xenopus oocytes or mammalian cells. Sumoylation inactivates the channel, but does not interfere with expression at the cell membrane. Sumoylation of a single subunit is sufficient to silence the dimeric channel. Sumoylation of KCNK1 is sufficient to silence heterodimeric channels formed by KCNK1 and KCNK3 or KCNK9. Desumoylated by SENP1; this activates the channel. Desumoylated by SENP1; this strongly increases halothane-mediated activation of heterodimeric channels formed with KCNK9. SENP1 treatment has no effect. As to expression, detected in brain and in kidney cortex and medulla, especially at the renal brush border membranes of the proximal convoluted tubules, in distal tubules and on intercalated cells of the collecting duct. Detected in cerebellum granule neurons. Detected in astrocytes in hippocampus stratum radiatum. Highly expressed in the stria vascularis in the cochlea. Detected in neurons in Scarpa's ganglion in the inner ear, at nerve terminals in the crista ampullaris, in supporting cells and dark cells, but not in hair cells (at protein level). Detected in the brain cerebellar granule cell layer, amygdala, thalamus reticular nucleus, habenula, mesencephalic trigeminal neurons, neocortex and piriform cortex, and at lower levels in the olfactory bulb. Detected in Scarpa's ganglia and crista ampullaris in the inner ear.

It localises to the cell membrane. It is found in the recycling endosome. The protein resides in the apical cell membrane. Its subcellular location is the cytoplasmic vesicle. The protein localises to the perikaryon. It localises to the cell projection. It is found in the dendrite. The protein resides in the synaptic cell membrane. The enzyme catalyses K(+)(in) = K(+)(out). The catalysed reaction is NH4(+)(in) = NH4(+)(out). It catalyses the reaction Na(+)(in) = Na(+)(out). It carries out the reaction Rb(+)(in) = Rb(+)(out). The enzyme catalyses Cs(+)(in) = Cs(+)(out). The catalysed reaction is Li(+)(in) = Li(+)(out). It catalyses the reaction L-glutamate(out) = L-glutamate(in). It carries out the reaction chloride(in) = chloride(out). Its activity is regulated as follows. Inhibited by 100 uM quinine. Slightly inhibited by Ba(+). Activity is first increased and then decreased when the extracellular pH is lowered to 6.0. Ion channel that contributes to passive transmembrane potassium transport and to the regulation of the resting membrane potential in brain astrocytes, but also in kidney and in other tissues. Forms dimeric channels through which potassium ions pass in accordance with their electrochemical gradient. The channel is selective for K(+) ions at physiological potassium concentrations and at neutral pH, but becomes permeable to Na(+) at subphysiological K(+) levels and upon acidification of the extracellular medium. The homodimer has very low potassium channel activity, when expressed in heterologous systems, and can function as weakly inward rectifying potassium channel. Channel activity is modulated by activation of serotonin receptors. Heterodimeric channels containing KCNK1 and KCNK2 have much higher activity, and may represent the predominant form in astrocytes. Heterodimeric channels containing KCNK1 and KCNK3 or KCNK9 have much higher activity. Heterodimeric channels formed by KCNK1 and KCNK9 may contribute to halothane-sensitive currents. Mediates outward rectifying potassium currents in dentate gyrus granule cells and contributes to the regulation of their resting membrane potential. Contributes to the regulation of action potential firing in dentate gyrus granule cells and down-regulates their intrinsic excitability. Contributes to the regulation of the resting membrane potential of pancreatic beta cells. In astrocytes, the heterodimer formed by KCNK1 and KCNK2 is required for rapid glutamate release in response to activation of G-protein coupled receptors, such as F2R and CNR1. Required for normal ion and water transport in the kidney. The low channel activity of homodimeric KCNK1 may be due to sumoylation. The low channel activity may be due to rapid internalization from the cell membrane and retention in recycling endosomes. Permeable to monovalent cations with ion selectivity for K(+) &gt; Rb(+) &gt;&gt; NH4(+) &gt;&gt; Cs(+) = Na(+) = Li(+). The chain is Potassium channel subfamily K member 1 from Rattus norvegicus (Rat).